A 1337-amino-acid chain; its full sequence is DNA-directed RNA polymerase subunit beta' (1337 aa).

Zn(2+)-binding residues include cysteine 60, cysteine 62, cysteine 75, and cysteine 78. Residues aspartate 536, aspartate 538, and aspartate 540 each coordinate Mg(2+). Cysteine 895, cysteine 974, cysteine 981, and cysteine 984 together coordinate Zn(2+).

It belongs to the RNA polymerase beta' chain family. The RNAP catalytic core consists of 2 alpha, 1 beta, 1 beta' and 1 omega subunit. When a sigma factor is associated with the core the holoenzyme is formed, which can initiate transcription. The cofactor is Mg(2+). Requires Zn(2+) as cofactor.

It carries out the reaction RNA(n) + a ribonucleoside 5'-triphosphate = RNA(n+1) + diphosphate. Its function is as follows. DNA-dependent RNA polymerase catalyzes the transcription of DNA into RNA using the four ribonucleoside triphosphates as substrates. In Bifidobacterium adolescentis (strain ATCC 15703 / DSM 20083 / NCTC 11814 / E194a), this protein is DNA-directed RNA polymerase subunit beta'.